A 394-amino-acid chain; its full sequence is Putative fimbrial assembly protein FimD, serogroup D (394 aa).

The sequence is that of Putative fimbrial assembly protein FimD, serogroup D (fimD) from Dichelobacter nodosus (Bacteroides nodosus).